Reading from the N-terminus, the 235-residue chain is Large ribosomal subunit protein uL1 (235 aa).

Belongs to the universal ribosomal protein uL1 family. In terms of assembly, part of the 50S ribosomal subunit.

Functionally, binds directly to 23S rRNA. The L1 stalk is quite mobile in the ribosome, and is involved in E site tRNA release. Its function is as follows. Protein L1 is also a translational repressor protein, it controls the translation of the L11 operon by binding to its mRNA. This chain is Large ribosomal subunit protein uL1, found in Fervidobacterium nodosum (strain ATCC 35602 / DSM 5306 / Rt17-B1).